The chain runs to 422 residues: Zinc finger protein 550 (422 aa).

The KRAB domain maps to 12–83; sequence VTFKDVAVTF…KRGLSHATCA (72 aa). A disordered region spans residues 113–158; that stretch reads LESSTSSDSRLGRARDEEGLLEMQKGKVTPETDLHKETHLGKVSLE. Residues 122-152 are compositionally biased toward basic and acidic residues; the sequence is RLGRARDEEGLLEMQKGKVTPETDLHKETHL. 8 C2H2-type zinc fingers span residues 203–225, 231–253, 259–281, 287–309, 315–337, 343–365, 371–393, and 399–421; these read YKCK…QRVH, YECN…YLIH, YKCL…HPIH, YECS…NRTH, FECK…YIIH, YDCM…QRIH, YECT…SVIH, and YKCI…QRVH.

This sequence belongs to the krueppel C2H2-type zinc-finger protein family.

It localises to the nucleus. Its function is as follows. May be involved in transcriptional regulation. In Homo sapiens (Human), this protein is Zinc finger protein 550 (ZNF550).